The chain runs to 289 residues: Cuticle collagen 19 (289 aa).

The signal sequence occupies residues 1–18; that stretch reads MGKLIVVGSCGVLVCVLA. The tract at residues 95–289 is disordered; it reads SEGCPAGPPG…PCPSRAAYKA (195 aa). Triple-helical region stretches follow at residues 101 to 130 and 147 to 269; these read GPPG…PGVI and GRPG…KGED. The segment covering 162–183 has biased composition (gly residues); that stretch reads GPAGGNGRRGPPGPVGGPGEQG. Low complexity-rich tracts occupy residues 184 to 207 and 223 to 239; these read PQGD…GEPG and PRGE…PGND.

This sequence belongs to the cuticular collagen family. In terms of assembly, collagen polypeptide chains are complexed within the cuticle by disulfide bonds and other types of covalent cross-links.

Its function is as follows. Nematode cuticles are composed largely of collagen-like proteins. The cuticle functions both as an exoskeleton and as a barrier to protect the worm from its environment. In Caenorhabditis elegans, this protein is Cuticle collagen 19 (col-19).